A 376-amino-acid polypeptide reads, in one-letter code: MSSQPKPRVAVVFGGRSSEHAISCVTAAGVLAALDGDVYDVVPIGITTTGRWVLVEDPARFELTDGALPEVPATGTPVGLPLDVDTKALQRLGGAPGAPALAELGEVDVVLPLLHGPFGEDGTLQGLLELSDTRYVGSGVLASAAGMDKQVMKLLLAGQGLPVGPWTSFRARRWDTDRDGVVAEVEALGYPVFVKPARAGSSIGITRVTSREGLAAAVAEAVSHDPKVVVEAALVGREIECGVLEDLDGGEPLTSLPGEVEVVGGHDFYDFEAKYLDSGNVRLTCPADLPDDVVAAVRRTAVRVFEAMGAEGLARVDLFVDPARGEDGIVVNEINTMPGFTPFSMYPRMWAATGVDYPELVHRLIQLALRRPTGLR.

In terms of domain architecture, ATP-grasp spans 153–366 (KLLLAGQGLP…YPELVHRLIQ (214 aa)). An ATP-binding site is contributed by 185 to 240 (VEALGYPVFVKPARAGSSIGITRVTSREGLAAAVAEAVSHDPKVVVEAALVGREIE). Positions 317, 333, and 335 each coordinate Mg(2+).

Belongs to the D-alanine--D-alanine ligase family. It depends on Mg(2+) as a cofactor. Mn(2+) is required as a cofactor.

The protein localises to the cytoplasm. The enzyme catalyses 2 D-alanine + ATP = D-alanyl-D-alanine + ADP + phosphate + H(+). It participates in cell wall biogenesis; peptidoglycan biosynthesis. Its function is as follows. Cell wall formation. This Kineococcus radiotolerans (strain ATCC BAA-149 / DSM 14245 / SRS30216) protein is D-alanine--D-alanine ligase.